The following is a 410-amino-acid chain: Arginine deiminase (410 aa).

The active-site Amidino-cysteine intermediate is C400.

The protein belongs to the arginine deiminase family.

It localises to the cytoplasm. The catalysed reaction is L-arginine + H2O = L-citrulline + NH4(+). Its pathway is amino-acid degradation; L-arginine degradation via ADI pathway; carbamoyl phosphate from L-arginine: step 1/2. This chain is Arginine deiminase (arcA), found in Lactococcus lactis subsp. lactis (strain IL1403) (Streptococcus lactis).